The primary structure comprises 499 residues: Interferon regulatory factor 5 (499 aa).

The short motif at 12–18 (PRRVRLK) is the Nuclear localization signal element. The IRF tryptophan pentad repeat DNA-binding region spans 14 to 122 (RVRLKPWLVA…QPYKVYEVCS (109 aa)). The tract at residues 121 to 142 (CSNGPAPAESQPSEDNAEEEEE) is disordered. Positions 145 to 155 (LQKMLPGLSIT) match the Nuclear export signal motif. Ser-153 and Ser-294 each carry phosphoserine; by TBK1. At Ser-302 the chain carries Phosphoserine. Residues Lys-412 and Lys-413 each participate in a glycyl lysine isopeptide (Lys-Gly) (interchain with G-Cter in ubiquitin) cross-link. Residues Ser-432, Ser-436, Ser-438, Ser-441, and Ser-447 each carry the phosphoserine modification.

This sequence belongs to the IRF family. In terms of assembly, homodimer, when phosphorylated. Interacts with TASL (via pLxIS motif); interaction takes place downstream of TLR7, TLR8 or TLR9, leading to its activation. Interacts with MYD88 and TRAF6. Phosphorylation of serine and threonine residues by IKBKB in a C-terminal autoinhibitory region, stimulates dimerization, transport into the nucleus, assembly with the coactivator CBP/EP300 and initiation of transcription. Post-translationally, 'Lys-63'-linked polyubiquitination by TRAF6 is required for activation.

The protein localises to the cytoplasm. It is found in the nucleus. With respect to regulation, maintained as a monomer in an autoinhibited state. Phosphorylation and activation follow the following steps: innate adapter protein TASL recruits IRF5, thereby licensing IRF5 for phosphorylation by IKBKB. Phosphorylated IRF5 dissociates from the adapter proteins, dimerizes, and then enters the nucleus to induce IFNs. Functionally, transcription factor that plays a critical role in innate immunity by activating expression of type I interferon (IFN) IFNA and INFB and inflammatory cytokines downstream of endolysosomal toll-like receptors TLR7, TLR8 and TLR9. Regulates the transcription of type I IFN genes (IFN-alpha and IFN-beta) and IFN-stimulated genes (ISG) by binding to an interferon-stimulated response element (ISRE) in their promoters. Can efficiently activate both the IFN-beta (IFNB) and the IFN-alpha (IFNA) genes and mediate their induction downstream of the TLR-activated, MyD88-dependent pathway. This is Interferon regulatory factor 5 from Bos taurus (Bovine).